The sequence spans 107 residues: MTHTHDHEHDHNHEPDYITLVDENGNESLFQILITIDGQEEFGKNYVVLQPTEFEEDEQGLIDVLAYSFTENADGTEGDLQPIPEDAEDEWDMIEEVFNSFMDEQED.

Belongs to the UPF0473 family.

This Lactococcus lactis subsp. cremoris (strain MG1363) protein is UPF0473 protein llmg_0152.